Here is a 261-residue protein sequence, read N- to C-terminus: MSTALATLAGKLAERVGMDSVDPQELITTLRQTAFKGDASDAQFIALLIVANQYGLNPWTKEIYAFPDKQNGIVPVVGVDGWSRIINENQQFDGMDFEQDNESCTCRIYRKDRNHPICVTEWMDECRREPFKTREGREITGPWQSHPKRMLRHKAMIQCARLAFGFAGIYDKDEAERIVENTAYTAERQPERDITPVNDETMQEINTLLIALDKTWDDDLLPLCSQIFRRDIRASSELTQAEAVKALGFLKQKAAEQKVAA.

Gene bet protein functions in general recombination and in the late, rolling-circle mode of lambda DNA replication. Has a function similar to that of E.coli recT. It is a single-stranded DNA binding protein that can promote renaturation of DNA. The polypeptide is Recombination protein bet (bet) (Escherichia coli (Bacteriophage lambda)).